Consider the following 117-residue polypeptide: Ribonuclease P protein component (117 aa).

This sequence belongs to the RnpA family. As to quaternary structure, consists of a catalytic RNA component (M1 or rnpB) and a protein subunit.

It carries out the reaction Endonucleolytic cleavage of RNA, removing 5'-extranucleotides from tRNA precursor.. Its function is as follows. RNaseP catalyzes the removal of the 5'-leader sequence from pre-tRNA to produce the mature 5'-terminus. It can also cleave other RNA substrates such as 4.5S RNA. The protein component plays an auxiliary but essential role in vivo by binding to the 5'-leader sequence and broadening the substrate specificity of the ribozyme. The protein is Ribonuclease P protein component of Limosilactobacillus reuteri subsp. reuteri (strain JCM 1112) (Lactobacillus reuteri).